A 111-amino-acid polypeptide reads, in one-letter code: Large ribosomal subunit protein P1 (111 aa).

The tract at residues 75-111 (AAAPAAEEKAEEEKKEEEEEKKEEEVDLSGLSGMFGF) is disordered. Residues 88 to 101 (KKEEEEEKKEEEVD) are compositionally biased toward acidic residues.

It belongs to the eukaryotic ribosomal protein P1/P2 family. Part of the 50S ribosomal subunit. Homodimer, it forms part of the ribosomal stalk which helps the ribosome interact with GTP-bound translation factors. Forms a heptameric uL10/P0(P1)2(P1)2(P1)2 complex, where uL10/P0 forms an elongated spine to which the P1 dimers bind in a sequential fashion.

In terms of biological role, forms part of the ribosomal stalk, playing a central role in the interaction of the ribosome with GTP-bound translation factors. In Aeropyrum pernix (strain ATCC 700893 / DSM 11879 / JCM 9820 / NBRC 100138 / K1), this protein is Large ribosomal subunit protein P1.